Here is a 292-residue protein sequence, read N- to C-terminus: 33 kDa chaperonin (292 aa).

2 disulfides stabilise this stretch: Cys-238/Cys-240 and Cys-271/Cys-274.

The protein belongs to the HSP33 family. In terms of processing, under oxidizing conditions two disulfide bonds are formed involving the reactive cysteines. Under reducing conditions zinc is bound to the reactive cysteines and the protein is inactive.

It is found in the cytoplasm. Its function is as follows. Redox regulated molecular chaperone. Protects both thermally unfolding and oxidatively damaged proteins from irreversible aggregation. Plays an important role in the bacterial defense system toward oxidative stress. This chain is 33 kDa chaperonin, found in Latilactobacillus sakei subsp. sakei (strain 23K) (Lactobacillus sakei subsp. sakei).